A 422-amino-acid chain; its full sequence is Multifunctional CCA protein (422 aa).

Gly8 and Arg11 together coordinate ATP. Residues Gly8 and Arg11 each contribute to the CTP site. 2 residues coordinate Mg(2+): Asp21 and Asp23. Residues Arg91, Arg137, and Arg140 each coordinate ATP. CTP contacts are provided by Arg91, Arg137, and Arg140. The 102-residue stretch at 228–329 folds into the HD domain; it reads TGLHSLMALE…VKLLQSCDAW (102 aa). The tract at residues 403 to 422 is disordered; sequence FKQDNAPEAQEKGGEDVGLT.

It belongs to the tRNA nucleotidyltransferase/poly(A) polymerase family. Bacterial CCA-adding enzyme type 1 subfamily. Monomer. Can also form homodimers and oligomers. It depends on Mg(2+) as a cofactor. Ni(2+) serves as cofactor.

It catalyses the reaction a tRNA precursor + 2 CTP + ATP = a tRNA with a 3' CCA end + 3 diphosphate. It carries out the reaction a tRNA with a 3' CCA end + 2 CTP + ATP = a tRNA with a 3' CCACCA end + 3 diphosphate. Functionally, catalyzes the addition and repair of the essential 3'-terminal CCA sequence in tRNAs without using a nucleic acid template. Adds these three nucleotides in the order of C, C, and A to the tRNA nucleotide-73, using CTP and ATP as substrates and producing inorganic pyrophosphate. tRNA 3'-terminal CCA addition is required both for tRNA processing and repair. Also involved in tRNA surveillance by mediating tandem CCA addition to generate a CCACCA at the 3' terminus of unstable tRNAs. While stable tRNAs receive only 3'-terminal CCA, unstable tRNAs are marked with CCACCA and rapidly degraded. In Hahella chejuensis (strain KCTC 2396), this protein is Multifunctional CCA protein.